The following is a 193-amino-acid chain: Probable nicotinate-nucleotide adenylyltransferase (193 aa).

The protein belongs to the NadD family.

The catalysed reaction is nicotinate beta-D-ribonucleotide + ATP + H(+) = deamido-NAD(+) + diphosphate. The protein operates within cofactor biosynthesis; NAD(+) biosynthesis; deamido-NAD(+) from nicotinate D-ribonucleotide: step 1/1. Catalyzes the reversible adenylation of nicotinate mononucleotide (NaMN) to nicotinic acid adenine dinucleotide (NaAD). This chain is Probable nicotinate-nucleotide adenylyltransferase, found in Flavobacterium johnsoniae (strain ATCC 17061 / DSM 2064 / JCM 8514 / BCRC 14874 / CCUG 350202 / NBRC 14942 / NCIMB 11054 / UW101) (Cytophaga johnsonae).